A 201-amino-acid chain; its full sequence is Small ribosomal subunit protein uS4 (201 aa).

One can recognise an S4 RNA-binding domain in the interval 103 to 167 (RRLQTIVTKK…SKIPQVLEKT (65 aa)). The disordered stretch occupies residues 163–201 (VLEKTKSEAPAEETVEAPAEETVEAPAEEKKEESPSTES). A compositionally biased stretch (acidic residues) spans 172 to 185 (PAEETVEAPAEETV). Over residues 189 to 201 (AEEKKEESPSTES) the composition is skewed to basic and acidic residues.

Belongs to the universal ribosomal protein uS4 family. As to quaternary structure, part of the 30S ribosomal subunit. Contacts protein S5. The interaction surface between S4 and S5 is involved in control of translational fidelity.

One of the primary rRNA binding proteins, it binds directly to 16S rRNA where it nucleates assembly of the body of the 30S subunit. Its function is as follows. With S5 and S12 plays an important role in translational accuracy. This Nitrosopumilus maritimus (strain SCM1) protein is Small ribosomal subunit protein uS4.